The chain runs to 203 residues: ESCRT-related protein CHMP1B (203 aa).

Coiled coils occupy residues 13–51 (DLKF…MDGA) and 109–140 (GNLQ…NAMA). The segment at 172–203 (PQPAGHAIPTKTEEKVDEDDLSRRLAELKARG) is disordered. Residues 192–203 (LSRRLAELKARG) are compositionally biased toward basic and acidic residues.

The protein belongs to the SNF7 family. Interacts with CHMP1A and LIP5. Interacts with VPS2.2.

Its subcellular location is the cytoplasm. The protein localises to the endosome membrane. Its function is as follows. Involved in ESCRT-dependent multivesicular body (MVB) formation and sorting of endosomal cargo proteins into MVBs. Mediates the MVB sorting of the auxin carriers PIN1, PIN2 and AUX1. Required for embryonic axis establishment and seedling growth. Required for autophagic degradation of plastid proteins. Promotes the efficient sequestration of cargo from plastids into autophagosomes. Mediates the efficient delivery of autophagic plastid bodies to the vacuole, but not into the cytoplasm. The sequence is that of ESCRT-related protein CHMP1B from Arabidopsis thaliana (Mouse-ear cress).